The chain runs to 1394 residues: Ninein-like protein (1394 aa).

EF-hand domains lie at 8–43 (HYVS…LGLE) and 42–77 (LEEQ…VLSS). 2 disordered regions span residues 77-99 (SGSG…SCAV) and 126-166 (KYGS…KEPQ). Serine 149 carries the post-translational modification Phosphoserine. The segment covering 151 to 166 (ESLKSDEDAESAKEPQ) has biased composition (basic and acidic residues). EF-hand domains follow at residues 197-232 (TPEN…IGLH) and 234-269 (LEKQ…HEPP). Ca(2+) is bound by residues aspartate 247, aspartate 249, aspartate 251, arginine 253, and glutamate 258. Coiled coils occupy residues 382-423 (RQEL…MDDC), 461-515 (WEQA…DSEK), and 544-584 (EQFT…SRQS). Positions 494-496 (KEN) match the KEN box motif. The segment at 578 to 602 (LPRSRQSPAGTPGTHRRRIPGRGPA) is disordered. Positions 632–640 (RMQLETKVN) match the D-box motif. The stretch at 835–863 (EKEKLEQTYREQVEGLVQEADVLRALLKN) forms a coiled coil. Residues 866-893 (TVVSDQQERTPSSMSLGPDSRQQPTARQ) show a composition bias toward polar residues. A disordered region spans residues 866 to 977 (TVVSDQQERT…SARTLTGQGQ (112 aa)). Positions 939-951 (RSSENLGVRDNHQ) are enriched in basic and acidic residues. 2 coiled-coil regions span residues 1057–1229 (SESE…ELTE) and 1269–1331 (GARV…LRKQ).

In terms of assembly, interacts with gamma-tubulin and TUBGCP4. Interacts with anaphase promoting complex/cyclosome (APC/C). Interacts with CDC20 and FZR1. Interacts with LCA5 and USH2A. Phosphorylated by PLK1 which disrupts its centrosome association and interaction with gamma-tubulin. In terms of processing, ubiquitinated by the APC/C complex leading to its degradation.

It is found in the cytoplasm. Its subcellular location is the cytoskeleton. The protein resides in the microtubule organizing center. The protein localises to the centrosome. In terms of biological role, involved in the microtubule organization in interphase cells. Overexpression induces the fragmentation of the Golgi, and causes lysosomes to disperse toward the cell periphery; it also interferes with mitotic spindle assembly. Involved in vesicle transport in photoreceptor cells. The chain is Ninein-like protein (Ninl) from Mus musculus (Mouse).